We begin with the raw amino-acid sequence, 782 residues long: Nezukol synthase KSL3 (782 aa).

Asp529, Asp533, Asn677, and Glu685 together coordinate Mg(2+). The short motif at 529–533 (DDVFD) is the DDXXD motif element.

The protein belongs to the terpene synthase family. It depends on Mg(2+) as a cofactor. As to expression, highly expressed in leaves, and, at low levels, in stems, but barely in roots and flowers.

It catalyses the reaction (+)-copalyl diphosphate = miltiradiene + diphosphate. The enzyme catalyses (+)-copalyl diphosphate + H2O = nezukol + diphosphate. The protein operates within secondary metabolite biosynthesis; terpenoid biosynthesis. In terms of biological role, involved in the biosynthesis of ent-kaurene diterpenoids natural products such as oridonin, miltiradiene, eriocalyxin B and nezukol, known to exhibit antitumor, anti-inflammatory and antibacterial activities. Catalyzes the conversion of (+)-copalyl diphosphate ((+)-CPP) to nezukol and miltiradiene. The reaction mechanism proceeds via the ionization of the diphosphate group of (+)-CPP, followed by formation of an intermediary pimar-15-en-8-yl(+) carbocation and neutralization of the carbocation by water capture at C-8 to yield nezukol. Can interact with ent-copalyl diphosphate (ent-CPP) but seems unable to use it as substrate. The protein is Nezukol synthase KSL3 of Isodon rubescens (Rabdosia rubescens).